The primary structure comprises 191 residues: GDP-mannose pyrophosphatase (191 aa).

GDP-alpha-D-mannose contacts are provided by residues isoleucine 38–glutamate 40, arginine 67, and alanine 85–leucine 87. One can recognise a Nudix hydrolase domain in the interval aspartate 43–leucine 180. Mg(2+) is bound by residues alanine 85, glutamate 100, and glutamate 104. The Nudix box motif lies at glycine 86 to glycine 106. Residues glutamate 104, glutamate 127, aspartate 150 to glutamate 151, and lysine 176 contribute to the GDP-alpha-D-mannose site. Glutamate 151 provides a ligand contact to Mg(2+).

It belongs to the Nudix hydrolase family. NudK subfamily. As to quaternary structure, homodimer. Mg(2+) is required as a cofactor.

The enzyme catalyses GDP-alpha-D-mannose + H2O = alpha-D-mannose 1-phosphate + GMP + 2 H(+). Its function is as follows. Nucleoside diphosphate sugar hydrolase that hydrolyzes GDP-mannose as its preferred substrate, yielding GMP and mannose-1-phosphate. The polypeptide is GDP-mannose pyrophosphatase (nudK) (Yersinia enterocolitica serotype O:8 / biotype 1B (strain NCTC 13174 / 8081)).